Here is a 132-residue protein sequence, read N- to C-terminus: Small ribosomal subunit protein uS8 (132 aa).

Belongs to the universal ribosomal protein uS8 family. In terms of assembly, part of the 30S ribosomal subunit. Contacts proteins S5 and S12.

Functionally, one of the primary rRNA binding proteins, it binds directly to 16S rRNA central domain where it helps coordinate assembly of the platform of the 30S subunit. The polypeptide is Small ribosomal subunit protein uS8 (Bartonella tribocorum (strain CIP 105476 / IBS 506)).